The sequence spans 225 residues: Protein YIP4 (225 aa).

S27 and S28 each carry phosphoserine. The next 5 membrane-spanning stretches (helical) occupy residues W91–T111, S118–I138, L154–I176, V180–S199, and K205–L225.

It belongs to the YIP1 family. Interacts with the YIP1 family members yip1 and yip5, and with several Rab GTPases.

The protein resides in the membrane. Functionally, may be involved in proper membrane localization of Rab GTPases. This chain is Protein YIP4, found in Schizosaccharomyces pombe (strain 972 / ATCC 24843) (Fission yeast).